The primary structure comprises 413 residues: Sensor protein SphS (413 aa).

Residues 176–398 enclose the Histidine kinase domain; that stretch reads DVAHELKTPL…WLRVQLPQEP (223 aa). H179 is modified (phosphohistidine; by autocatalysis).

The protein resides in the cytoplasm. It carries out the reaction ATP + protein L-histidine = ADP + protein N-phospho-L-histidine.. In terms of biological role, member of the two-component regulatory system SphR/SphS. Sensory kinase. Is involved in inducible production of alkaline phosphatase in response to phosphate limitation as it is directly involved in the regulation of phoA transcription in response to phosphate limitation. SphS functions as a protein kinase that phosphorylates SphR. The protein is Sensor protein SphS (sphS) of Synechococcus elongatus (strain ATCC 33912 / PCC 7942 / FACHB-805) (Anacystis nidulans R2).